We begin with the raw amino-acid sequence, 234 residues long: Uridylate kinase (234 aa).

Residue 9 to 12 (KLSG) participates in ATP binding. Residue G51 coordinates UMP. The ATP site is built by G52 and R56. Residues D71 and 132–139 (CGNPFFTT) each bind UMP. ATP contacts are provided by T159, Y165, and D168.

This sequence belongs to the UMP kinase family. Homohexamer.

Its subcellular location is the cytoplasm. The enzyme catalyses UMP + ATP = UDP + ADP. The protein operates within pyrimidine metabolism; CTP biosynthesis via de novo pathway; UDP from UMP (UMPK route): step 1/1. With respect to regulation, inhibited by UTP. Its function is as follows. Catalyzes the reversible phosphorylation of UMP to UDP. The polypeptide is Uridylate kinase (Prochlorococcus marinus (strain AS9601)).